A 535-amino-acid polypeptide reads, in one-letter code: Calcium-dependent protein kinase 7 (535 aa).

A disordered region spans residues 1-29 (MGNCCGNPSSATNQSKQGKPKNKNNPFYS). The N-myristoyl glycine moiety is linked to residue G2. Positions 59-317 (YDLGREVGRG…AAQVLEHTWI (259 aa)) constitute a Protein kinase domain. ATP is bound by residues 65–73 (VGRGEFGIT) and K88. Catalysis depends on D183, which acts as the Proton acceptor. S223 is modified (phosphoserine). The interval 323-353 (APNVSLGETVKARLKQFSVMNKLKKRALRVI) is autoinhibitory domain. EF-hand domains follow at residues 360–395 (EEAAGIKEAFEMMDVNKRGKINLEELKYGLQKAGQQ), 396–431 (IADTDLQILMEATDVDGDGTLNYSEFVAVSVHLKKM), 432–467 (ANDEHLHKAFNFFDQNQSGYIEIDELREALNDELDN), and 468–504 (TSSEEVIAAIMQDVDTDKDGRISYEEFVAMMKAGTDW). Positions 373, 375, 379, 384, 409, 411, 413, 415, 420, 445, 447, 449, 451, 456, 482, 484, 486, and 488 each coordinate Ca(2+). S490 carries the post-translational modification Phosphoserine. A Ca(2+)-binding site is contributed by E493.

It belongs to the protein kinase superfamily. Ser/Thr protein kinase family. CDPK subfamily.

The protein localises to the cell membrane. The catalysed reaction is L-seryl-[protein] + ATP = O-phospho-L-seryl-[protein] + ADP + H(+). It catalyses the reaction L-threonyl-[protein] + ATP = O-phospho-L-threonyl-[protein] + ADP + H(+). Its activity is regulated as follows. Activated by calcium. Autophosphorylation may play an important role in the regulation of the kinase activity. In terms of biological role, may play a role in signal transduction pathways that involve calcium as a second messenger. The protein is Calcium-dependent protein kinase 7 (CPK7) of Arabidopsis thaliana (Mouse-ear cress).